Consider the following 1442-residue polypeptide: CD109 antigen (1442 aa).

The signal sequence occupies residues 1 to 21 (MRSRRLLSAAHLLCLCAVALA). N-linked (GlcNAc...) asparagine glycans are attached at residues N67, N117, N246, N278, N370, and N421. A bait region (approximate) region spans residues 595–704 (DKSVTLMENS…TWIWLDAYMG (110 aa)). Positions 923-926 (CGEQ) form a cross-link, isoglutamyl cysteine thioester (Cys-Gln). The N-linked (GlcNAc...) asparagine glycan is linked to N1088. The GPI-anchor amidated alanine moiety is linked to residue A1419. Residues 1420–1442 (TDSLRRSSSLLVFCSVLLYFVQH) constitute a propeptide, removed in mature form.

Belongs to the protease inhibitor I39 (alpha-2-macroglobulin) family. Heterodimer; disulfide-linked. Interacts with TGFB1 and TGFBR1. Forms a heteromeric complex with TGFBR1, TGFBR2 and TGFBR3 in a ligand-independent manner. In terms of processing, N-glycosylated. 2 forms of 150 (p150) and 120 kDa (p120) exist due to proteolytic degradation from a 180 kDa form.

The protein resides in the cell membrane. Functionally, modulates negatively TGFB1 signaling in keratinocytes. This is CD109 antigen (Cd109) from Mus musculus (Mouse).